The sequence spans 413 residues: Enolase (413 aa).

Gln170 contributes to the (2R)-2-phosphoglycerate binding site. The active-site Proton donor is the Glu212. Mg(2+)-binding residues include Asp245, Glu286, and Asp313. Residues Lys338, Arg367, Ser368, and Lys389 each coordinate (2R)-2-phosphoglycerate. The active-site Proton acceptor is Lys338.

The protein belongs to the enolase family. It depends on Mg(2+) as a cofactor.

The protein localises to the cytoplasm. The protein resides in the secreted. It localises to the cell surface. The enzyme catalyses (2R)-2-phosphoglycerate = phosphoenolpyruvate + H2O. The protein operates within carbohydrate degradation; glycolysis; pyruvate from D-glyceraldehyde 3-phosphate: step 4/5. In terms of biological role, catalyzes the reversible conversion of 2-phosphoglycerate (2-PG) into phosphoenolpyruvate (PEP). It is essential for the degradation of carbohydrates via glycolysis. In Neorickettsia sennetsu (strain ATCC VR-367 / Miyayama) (Ehrlichia sennetsu), this protein is Enolase.